Reading from the N-terminus, the 78-residue chain is RTX-VII (78 aa).

An N-terminal signal peptide occupies residues 1 to 22 (MKTIVYLIVSILLLSSTVLVLA). The propeptide occupies 23-40 (EGNAASHELQEYPIEEQR). 4 cysteine pairs are disulfide-bonded: Cys42–Cys58, Cys47–Cys63, Cys57–Cys73, and Cys65–Cys71. The residue at position 76 (Arg76) is an Arginine amide.

As to expression, expressed by the venom gland.

It localises to the secreted. Agonist of rat Nav1.3/SCN3A. This toxin increases the peak current amplitude, and potently inhibits the fast inactivation of the channel (EC(50)=120 nM). The inhibition of fast inactivation is voltage-independent (depolarizing voltages ranging from 220 mV to 130 mV). The toxin might bind to the domain IV of the Nav1.3 channel, while domain II might not participate in interacting with the toxin but could determine the efficacy of RTX-VII. In vivo, when intracerebroventricularly injected into mice, the toxin causes involuntary body twitching (seizure-like symptoms). The polypeptide is RTX-VII (Macrothele raveni (Funnel-web spider)).